The sequence spans 209 residues: Chaperone protein TorD (209 aa).

It belongs to the TorD/DmsD family. TorD subfamily.

The protein resides in the cytoplasm. In terms of biological role, involved in the biogenesis of TorA. Acts on TorA before the insertion of the molybdenum cofactor and, as a result, probably favors a conformation of the apoenzyme that is competent for acquiring the cofactor. The chain is Chaperone protein TorD from Shewanella baltica (strain OS185).